The following is a 165-amino-acid chain: Phosphopantetheine adenylyltransferase (165 aa).

Position 9 (Ser-9) interacts with substrate. ATP contacts are provided by residues 9 to 10 (SF) and His-17. The substrate site is built by Lys-41, Ile-75, and Arg-89. ATP-binding positions include 90-92 (GVR), Glu-100, and 125-131 (YLFVRSD).

It belongs to the bacterial CoaD family. In terms of assembly, homohexamer. The cofactor is Mg(2+).

The protein localises to the cytoplasm. The catalysed reaction is (R)-4'-phosphopantetheine + ATP + H(+) = 3'-dephospho-CoA + diphosphate. The protein operates within cofactor biosynthesis; coenzyme A biosynthesis; CoA from (R)-pantothenate: step 4/5. Functionally, reversibly transfers an adenylyl group from ATP to 4'-phosphopantetheine, yielding dephospho-CoA (dPCoA) and pyrophosphate. The chain is Phosphopantetheine adenylyltransferase from Borrelia duttonii (strain Ly).